The sequence spans 246 residues: Probable transcriptional regulatory protein ACP_0521 (246 aa).

The protein belongs to the TACO1 family.

The protein localises to the cytoplasm. The chain is Probable transcriptional regulatory protein ACP_0521 from Acidobacterium capsulatum (strain ATCC 51196 / DSM 11244 / BCRC 80197 / JCM 7670 / NBRC 15755 / NCIMB 13165 / 161).